Consider the following 612-residue polypeptide: UvrABC system protein C (612 aa).

Residues 20–98 (THSGVYRMLD…IKQHRPKYNI (79 aa)) form the GIY-YIG domain. The UVR domain maps to 208–243 (STVLEEISAKMYQASEDMEYEKAQVYRDQLVVLRKL).

Belongs to the UvrC family. In terms of assembly, interacts with UvrB in an incision complex.

It localises to the cytoplasm. In terms of biological role, the UvrABC repair system catalyzes the recognition and processing of DNA lesions. UvrC both incises the 5' and 3' sides of the lesion. The N-terminal half is responsible for the 3' incision and the C-terminal half is responsible for the 5' incision. The polypeptide is UvrABC system protein C (Francisella tularensis subsp. novicida (strain U112)).